A 197-amino-acid polypeptide reads, in one-letter code: Probable GTP-binding protein EngB (197 aa).

The EngB-type G domain occupies 22-195; that stretch reads QLPELALAGR…WRTILNHLKV (174 aa). Residues 30–37, 57–61, 75–78, 142–145, and 174–176 contribute to the GTP site; these read GRSNVGKS, GKTQT, DVPG, TKAD, and FSS. Mg(2+)-binding residues include Ser37 and Thr59.

Belongs to the TRAFAC class TrmE-Era-EngA-EngB-Septin-like GTPase superfamily. EngB GTPase family. Mg(2+) serves as cofactor.

Its function is as follows. Necessary for normal cell division and for the maintenance of normal septation. In Shouchella clausii (strain KSM-K16) (Alkalihalobacillus clausii), this protein is Probable GTP-binding protein EngB.